We begin with the raw amino-acid sequence, 649 residues long: Leucine-rich repeat transmembrane protein FLRT3 (649 aa).

Positions 1–28 (MISPAWSLFLIGTKIGLFFQVAPLSVMA) are cleaved as a signal peptide. The LRRNT domain occupies 29-58 (KSCPSVCRCDAGFIYCNDRSLTSIPVGIPE). The Extracellular portion of the chain corresponds to 29–528 (KSCPSVCRCD…KEPYKNPNLP (500 aa)). Intrachain disulfides connect cysteine 31–cysteine 37 and cysteine 35–cysteine 44. Residues 38 to 67 (DAGFIYCNDRSLTSIPVGIPEDATTLYLQN) are interaction with ADGRL3. LRR repeat units follow at residues 59–80 (DATTLYLQNNQINNVGIPSDLK), 84–104 (KVQRIYLYHNSLDEFPTNLPK), 105–126 (YVKELHLQENNIRTITYDSLSK), 129–150 (YLEELHLDDNSVSAVSIEEGAF), 155–176 (YLRLLFLSRNHLSTIPGGLPRT), 177–197 (IEELRLDDNRISTISSPSLHG), 200–220 (SLKRLVLDGNLLNNHGLGDKV), 226–247 (NLTELSLVRNSLTAAPVNLPGT), 248–269 (SLRKLYLQDNHINRVPPNAFSY), and 272–293 (QLYRLDMSNNNLSNLPQGIFDD). Asparagine 226 carries N-linked (GlcNAc...) asparagine glycosylation. N-linked (GlcNAc...) asparagine glycosylation is found at asparagine 282 and asparagine 296. The region spanning 305–357 (NPWYCGCKMKWVRDWLQSLPVKVNVRGLMCQAPEKVRGMAIKDLSAELFDCKD) is the LRRCT domain. A disulfide bridge connects residues cysteine 309 and cysteine 334. The segment at 378-405 (QGQWPAPVTKQPDIKNPKLTKDQRTTGS) is disordered. Positions 389–401 (PDIKNPKLTKDQR) are enriched in basic and acidic residues. The 100-residue stretch at 405-504 (SPSRKTILIT…VCIETQTAPL (100 aa)) folds into the Fibronectin type-III domain. A helical transmembrane segment spans residues 529 to 549 (LAAIIGGAVALVSIALLALVC). Residues 550 to 649 (WYVHRNGSLF…GIPDLDHSHS (100 aa)) are Cytoplasmic-facing. Residues 629–649 (ESSSNRSYRDSGIPDLDHSHS) form a disordered region.

As to quaternary structure, monomer and homodimer. Self-associates (via leucine-rich repeats), giving rise to homooligomers. Interacts with FGFR1. Interacts (via extracellular domain) with ADGRL1/LPHN1 and ADGRL3 (via olfactomedin-like domain). Interacts (via extracellular domain) with LPHN2 (via olfactomedin-like domain). Interacts (via extracellular domain) with UNC5B (via Ig domain). May also interact (via extracellular domain) with UNC5A and UNC5C. Interacts (via extracellular domain) with UNC5D (via extracellular domain). Identified in complexes composed of FLRT3, ADGRL3 and UNC5B, respectively FLRT3, ADGRL3 and UNC5D. Interacts (via cytoplasmic domain) with ROBO1. Post-translationally, N-glycosylated. In terms of processing, proteolytic cleavage in the juxtamembrane region gives rise to a soluble ectodomain. Cleavage is probably effected by a metalloprotease. In terms of tissue distribution, detected in brain (at protein level). Detected in brain neurons, especially in basal ganglia, hippocampus dentate gyrus and CA3 region, cerebellum and in olfactory bulb.

Its subcellular location is the cell membrane. The protein localises to the presynaptic cell membrane. It is found in the synapse. The protein resides in the synaptosome. It localises to the postsynaptic density. Its subcellular location is the cell projection. The protein localises to the dendrite. It is found in the axon. The protein resides in the growth cone membrane. It localises to the cytoplasmic vesicle. Its subcellular location is the endoplasmic reticulum membrane. The protein localises to the cell junction. It is found in the focal adhesion. The protein resides in the secreted. Its function is as follows. Functions in cell-cell adhesion, cell migration and axon guidance, exerting an attractive or repulsive role depending on its interaction partners. Plays a role in the spatial organization of brain neurons. Plays a role in vascular development in the retina. Plays a role in cell-cell adhesion via its interaction with ADGRL3 and probably also other latrophilins that are expressed at the surface of adjacent cells. Interaction with the intracellular domain of ROBO1 mediates axon attraction towards cells expressing NTN1. Mediates axon growth cone collapse and plays a repulsive role in neuron guidance via its interaction with UNC5B, and possibly also other UNC-5 family members. Promotes neurite outgrowth (in vitro). Mediates cell-cell contacts that promote an increase both in neurite number and in neurite length. Plays a role in the regulation of the density of glutamaergic synapses. Plays a role in fibroblast growth factor-mediated signaling cascades. Required for normal morphogenesis during embryonic development, but not for normal embryonic patterning. Required for normal ventral closure, headfold fusion and definitive endoderm migration during embryonic development. Required for the formation of a normal basement membrane and the maintenance of a normal anterior visceral endoderm during embryonic development. This Rattus norvegicus (Rat) protein is Leucine-rich repeat transmembrane protein FLRT3 (Flrt3).